The sequence spans 249 residues: Probable transcriptional regulatory protein AB57_1731 (249 aa).

It belongs to the TACO1 family.

Its subcellular location is the cytoplasm. The protein is Probable transcriptional regulatory protein AB57_1731 of Acinetobacter baumannii (strain AB0057).